We begin with the raw amino-acid sequence, 421 residues long: Subtilisin-like protease 2 (421 aa).

The first 16 residues, 1–16, serve as a signal peptide directing secretion; it reads MQLLNFGLLLLPFVAG. The propeptide occupies 17-122; the sequence is DLAPQPEPLL…VHPDQHVYLA (106 aa). Residues 36-122 enclose the Inhibitor I9 domain; the sequence is QYIVTLKEGL…VHPDQHVYLA (87 aa). Residues 131–421 form the Peptidase S8 domain; that stretch reads RWGLGYMSSK…ERKFTLPKYY (291 aa). Active-site charge relay system residues include aspartate 169 and histidine 201. 3 N-linked (GlcNAc...) asparagine glycosylation sites follow: asparagine 248, asparagine 261, and asparagine 348. Serine 357 serves as the catalytic Charge relay system. Asparagine 388 is a glycosylation site (N-linked (GlcNAc...) asparagine).

The protein belongs to the peptidase S8 family.

It is found in the secreted. Its function is as follows. Secreted subtilisin-like serine protease with keratinolytic activity that contributes to pathogenicity. This is Subtilisin-like protease 2 (SUB2) from Trichophyton verrucosum (strain HKI 0517).